The following is a 360-amino-acid chain: Uroporphyrinogen decarboxylase (360 aa).

Substrate-binding positions include 31 to 35 (RQAGR), Asp-81, Tyr-157, Thr-212, and His-333.

This sequence belongs to the uroporphyrinogen decarboxylase family. In terms of assembly, homodimer.

The protein resides in the cytoplasm. It catalyses the reaction uroporphyrinogen III + 4 H(+) = coproporphyrinogen III + 4 CO2. It functions in the pathway porphyrin-containing compound metabolism; protoporphyrin-IX biosynthesis; coproporphyrinogen-III from 5-aminolevulinate: step 4/4. Its function is as follows. Catalyzes the decarboxylation of four acetate groups of uroporphyrinogen-III to yield coproporphyrinogen-III. This is Uroporphyrinogen decarboxylase from Janthinobacterium sp. (strain Marseille) (Minibacterium massiliensis).